A 193-amino-acid chain; its full sequence is MATKLIVGLGNPGPKYLWTRHNAGFMVLDRLAHAIGASVTRKSFSGVFGEGAWHGERLLLLKPQTYMNLSGRSVAEALRFHKLPLCDTIVIHDDLDIPFGRVKVKEGGGHGGHNGLRSLVQELGGAGFVRVRVGIGRPVHGDVVNYVLTNFSQDEMADLAHLLDGTLDLLESLLTAGLPKTMSLYNNKDLLAP.

Tyr-16 contributes to the tRNA binding site. His-21 serves as the catalytic Proton acceptor. Positions 66, 68, and 114 each coordinate tRNA.

It belongs to the PTH family. As to quaternary structure, monomer.

The protein localises to the cytoplasm. The enzyme catalyses an N-acyl-L-alpha-aminoacyl-tRNA + H2O = an N-acyl-L-amino acid + a tRNA + H(+). Functionally, hydrolyzes ribosome-free peptidyl-tRNAs (with 1 or more amino acids incorporated), which drop off the ribosome during protein synthesis, or as a result of ribosome stalling. In terms of biological role, catalyzes the release of premature peptidyl moieties from peptidyl-tRNA molecules trapped in stalled 50S ribosomal subunits, and thus maintains levels of free tRNAs and 50S ribosomes. The sequence is that of Peptidyl-tRNA hydrolase from Geobacter sulfurreducens (strain ATCC 51573 / DSM 12127 / PCA).